We begin with the raw amino-acid sequence, 90 residues long: MEYQYPLDLDWSNEEMVDVIAFFNKIENYYENSVNGQDLMNHYKRFKEIVPSKAEEKQLFKEFEEKSNYNSYKVVQEVKNNPELTSFSAK.

Belongs to the UPF0223 family.

This is UPF0223 protein SH1855 from Staphylococcus haemolyticus (strain JCSC1435).